Reading from the N-terminus, the 520-residue chain is Hydroxymethylglutaryl-CoA synthase, cytoplasmic (520 aa).

Ser4 is subject to Phosphoserine. Residues Asp43 and Ala44 each coordinate (3S)-3-hydroxy-3-methylglutaryl-CoA. 44–46 is a binding site for CoA; the sequence is AGK. At Lys46 the chain carries N6-acetyllysine. The active-site Proton donor/acceptor is the Glu95. Positions 129, 167, 171, 221, and 264 each coordinate (3S)-3-hydroxy-3-methylglutaryl-CoA. Cys129 acts as the Acyl-thioester intermediate in catalysis. Residue Asn167 participates in CoA binding. Ser221 contributes to the CoA binding site. Catalysis depends on His264, which acts as the Proton donor/acceptor. Lys269 and Lys273 together coordinate CoA. (3S)-3-hydroxy-3-methylglutaryl-CoA is bound by residues Lys273, Asn343, and Ser377. At Lys273 the chain carries N6-acetyllysine. The segment at 488–520 is disordered; it reads TATEHIPSPAKKVPRLPATSAESESAVISNGEH. Ser495 and Ser516 each carry phosphoserine. Positions 507–520 are enriched in polar residues; the sequence is SAESESAVISNGEH.

Belongs to the thiolase-like superfamily. HMG-CoA synthase family. Homodimer.

The protein localises to the cytoplasm. The catalysed reaction is acetoacetyl-CoA + acetyl-CoA + H2O = (3S)-3-hydroxy-3-methylglutaryl-CoA + CoA + H(+). Its pathway is metabolic intermediate biosynthesis; (R)-mevalonate biosynthesis; (R)-mevalonate from acetyl-CoA: step 2/3. Functionally, catalyzes the condensation of acetyl-CoA with acetoacetyl-CoA to form HMG-CoA, which is converted by HMG-CoA reductase (HMGCR) into mevalonate, a precursor for cholesterol synthesis. The sequence is that of Hydroxymethylglutaryl-CoA synthase, cytoplasmic from Mus musculus (Mouse).